The sequence spans 283 residues: Pantothenate synthetase (283 aa).

ATP is bound at residue 30 to 37; it reads MGNLHNGH. The active-site Proton donor is histidine 37. A (R)-pantoate-binding site is contributed by glutamine 61. Glutamine 61 lines the beta-alanine pocket. 149–152 contributes to the ATP binding site; sequence GEKD. Glutamine 155 lines the (R)-pantoate pocket. 186–189 is an ATP binding site; sequence LSSR.

The protein belongs to the pantothenate synthetase family. Homodimer.

The protein localises to the cytoplasm. The enzyme catalyses (R)-pantoate + beta-alanine + ATP = (R)-pantothenate + AMP + diphosphate + H(+). It functions in the pathway cofactor biosynthesis; (R)-pantothenate biosynthesis; (R)-pantothenate from (R)-pantoate and beta-alanine: step 1/1. Functionally, catalyzes the condensation of pantoate with beta-alanine in an ATP-dependent reaction via a pantoyl-adenylate intermediate. This is Pantothenate synthetase from Shigella flexneri serotype 5b (strain 8401).